Consider the following 280-residue polypeptide: uncharacterized protein (280 aa).

K3 to V29 is an NADP(+) binding site. S139 lines the substrate pocket. Y152 acts as the Proton acceptor in catalysis.

The protein belongs to the short-chain dehydrogenases/reductases (SDR) family.

This is an uncharacterized protein from Bacillus subtilis (strain 168).